A 425-amino-acid polypeptide reads, in one-letter code: Trigger factor (425 aa).

In terms of domain architecture, PPIase FKBP-type spans 158 to 231 (GDLVRISMEV…VQEVYRRTLP (74 aa)).

This sequence belongs to the FKBP-type PPIase family. Tig subfamily.

The protein resides in the cytoplasm. The catalysed reaction is [protein]-peptidylproline (omega=180) = [protein]-peptidylproline (omega=0). Functionally, involved in protein export. Acts as a chaperone by maintaining the newly synthesized protein in an open conformation. Functions as a peptidyl-prolyl cis-trans isomerase. The sequence is that of Trigger factor from Thermotoga neapolitana (strain ATCC 49049 / DSM 4359 / NBRC 107923 / NS-E).